The primary structure comprises 156 residues: Ribonuclease pancreatic (156 aa).

A signal peptide spans 1–28 (MALEKSLVLLPLLVLILLVLGWVQPSLG). 2 residues coordinate substrate: lysine 35 and arginine 38. Histidine 40 (proton acceptor) is an active-site residue. 2 N-linked (GlcNAc...) asparagine glycosylation sites follow: asparagine 50 and asparagine 62. 4 cysteine pairs are disulfide-bonded: cysteine 54-cysteine 112, cysteine 68-cysteine 123, cysteine 86-cysteine 138, and cysteine 93-cysteine 100. Substrate contacts are provided by residues 69–73 (KPVNT) and lysine 94. Asparagine 104 carries N-linked (GlcNAc...) asparagine glycosylation. Arginine 113 is a binding site for substrate. Residue histidine 147 is the Proton donor of the active site.

It belongs to the pancreatic ribonuclease family. As to quaternary structure, monomer. Interacts with and forms tight 1:1 complexes with RNH1. Dimerization of two such complexes may occur. Interaction with RNH1 inhibits this protein. Pancreas and other tissues and body fluids (indicating it may have other physiological functions besides its role in digestion).

The protein localises to the secreted. The enzyme catalyses an [RNA] containing cytidine + H2O = an [RNA]-3'-cytidine-3'-phosphate + a 5'-hydroxy-ribonucleotide-3'-[RNA].. The catalysed reaction is an [RNA] containing uridine + H2O = an [RNA]-3'-uridine-3'-phosphate + a 5'-hydroxy-ribonucleotide-3'-[RNA].. In terms of biological role, endonuclease that catalyzes the cleavage of RNA on the 3' side of pyrimidine nucleotides. Acts on single-stranded and double-stranded RNA. The protein is Ribonuclease pancreatic (RNASE1) of Pongo pygmaeus (Bornean orangutan).